Reading from the N-terminus, the 467-residue chain is Ammonium transporter Rh type C (467 aa).

The Cytoplasmic segment spans residues 1–3; sequence MRL. The chain crosses the membrane as a helical span at residues 4 to 24; the sequence is RLPVVCFLWEIAMIVLFGIFV. Topologically, residues 25-55 are extracellular; sequence RYNDEADPHWSEFMKAQNITSDIQNDYYFRY. N-linked (GlcNAc...) asparagine glycosylation occurs at Asn42. Residues 56 to 76 traverse the membrane as a helical segment; it reads PSFQDVHVMIFVGFGFLMTFL. The Cytoplasmic segment spans residues 77–80; sequence KRYG. Residues 81–101 form a helical membrane-spanning segment; sequence FGSVAFNFLLAAFGIQWAILM. The Extracellular segment spans residues 102 to 119; that stretch reads QGWFHTFKNGKILIGVES. Residues 120–139 traverse the membrane as a helical segment; sequence LINADFCVGSVCIAFGAILG. Over 140–145 the chain is Cytoplasmic; sequence KVSPVQ. The helical transmembrane segment at 146–168 threads the bilayer; it reads IMVMTLFQVTLFAVNEWILLNLL. Residues 169–173 lie on the Extracellular side of the membrane; that stretch reads HVNDA. Residues 174-194 traverse the membrane as a helical segment; the sequence is GGSMTIHTFGAYFGLTVAWIL. Residues 195–213 lie on the Cytoplasmic side of the membrane; sequence NRPRLKQTNDKEGSVYVSD. Residues 214–234 form a helical membrane-spanning segment; that stretch reads LFSMIGTLFLWMFWPSFNSAV. The Extracellular segment spans residues 235–245; that stretch reads SYHGDAQHRAA. A helical transmembrane segment spans residues 246–266; it reads INTYCSLAACVLTTVAISSVV. Residues 267–271 are Cytoplasmic-facing; the sequence is NKKGK. The chain crosses the membrane as a helical span at residues 272–292; that stretch reads LEMVHIQNATLAGGVAVGTAA. Topologically, residues 293–295 are extracellular; that stretch reads EMM. A helical membrane pass occupies residues 296-316; the sequence is LTPYGSLIVGFICGIVSTLGF. The Cytoplasmic portion of the chain corresponds to 317–337; the sequence is TYCSPFLSNKLRLHDTCGIHN. Residues 338–358 form a helical membrane-spanning segment; sequence LHAMPGLIGGIVGAVTAACAT. Topologically, residues 359–390 are extracellular; that stretch reads EAVYTADGLKKMFRFEGDYATRTPSMQGGYQA. A helical membrane pass occupies residues 391-411; it reads AGLCVSLAFGLVGGTVVGCIL. Over 412-467 the chain is Cytoplasmic; that stretch reads KLPIWGDPSDENCFDDEVYWELPEEDEEEHLGAANQYVTHLPENFKLPDRTEVAFK.

This sequence belongs to the ammonium transporter (TC 2.A.49) family. Rh subfamily. In terms of assembly, homotrimer.

It localises to the apical cell membrane. In terms of biological role, functions as an ammonia transporter. The protein is Ammonium transporter Rh type C (rhcg) of Xenopus tropicalis (Western clawed frog).